Here is a 302-residue protein sequence, read N- to C-terminus: Short-chain dehydrogenase/reductase 3 (302 aa).

4 helical membrane-spanning segments follow: residues 9–29 (LVMF…GLVL), 170–190 (IVCL…DYCT), 195–215 (AFAF…VSAT), and 253–273 (AVQL…LVIL). Ser-175 lines the substrate pocket. Catalysis depends on Tyr-188, which acts as the Proton acceptor.

This sequence belongs to the short-chain dehydrogenases/reductases (SDR) family. In terms of tissue distribution, widely expressed with highest levels found in heart, placenta, lung, liver, kidney, pancreas, thyroid, testis, stomach, trachea and spinal cord. Lower levels found in skeletal muscle, intestine and lymph node. No expression detected in brain. In the retina, expressed in cone but not rod outer segments.

It localises to the membrane. The enzyme catalyses all-trans-retinol + NADP(+) = all-trans-retinal + NADPH + H(+). Functionally, catalyzes the reduction of all-trans-retinal to all-trans-retinol in the presence of NADPH. This Homo sapiens (Human) protein is Short-chain dehydrogenase/reductase 3 (DHRS3).